The sequence spans 129 residues: Endocuticle structural glycoprotein SgAbd-9 (129 aa).

Gln-1 is subject to Pyrrolidone carboxylic acid. The Chitin-binding type R&amp;R domain maps to 28–98 (DGSYTFSYES…VGNVVAPAIS (71 aa)). Thr-120 carries an O-linked (HexNAc...) threonine glycan.

Its function is as follows. Component of the abdominal endocuticle. The protein is Endocuticle structural glycoprotein SgAbd-9 of Schistocerca gregaria (Desert locust).